A 1527-amino-acid polypeptide reads, in one-letter code: Rho guanine nucleotide exchange factor 11 (1527 aa).

A disordered region spans residues 1–56 (MSIRLPHSIDRSASKKQSHLSSPIASWLSSLSSLGDSTPERTSPSHHRQPSDTSET). 4 positions are modified to phosphoserine: S2, S30, S32, and S51. Low complexity predominate over residues 19-37 (HLSSPIASWLSSLSSLGDS). Positions 64 to 143 (CVIIQKDQHG…LTLLGSSPPS (80 aa)) constitute a PDZ domain. Residues 216-247 (PCGETSQRTCEGRLSVDSQEADSGLDSGTERF) form a disordered region. A phosphoserine mark is found at S262 and S268. At T271 the chain carries Phosphothreonine. Phosphoserine occurs at positions 272 and 288. An RGSL domain is found at 323–503 (ESDIIFQDLE…NTFMSHAGIR (181 aa)). Positions 461-487 (LRERQMAEKQLAALGDILSKYEEDRSA) form a coiled coil. Disordered regions lie at residues 506–569 (ESRS…QSIK) and 582–687 (NSHQ…GRRS). The segment covering 509–519 (SSCTAEKTQSA) has biased composition (polar residues). Composition is skewed to basic and acidic residues over residues 539–551 (SKKE…DKKR) and 624–645 (KGRE…RSDV). Phosphoserine occurs at positions 643 and 671. Residues 656–672 (LHQSASSSASSLSTRSL) show a composition bias toward low complexity. Phosphothreonine occurs at positions 676 and 680. The DH domain occupies 742 to 931 (DRQEVINELF…REILKFVNEA (190 aa)). The 115-residue stretch at 973–1087 (KMIHEGPLTW…WMELLEEAVQ (115 aa)) folds into the PH domain. Disordered regions lie at residues 1090–1184 (TKHP…NRGI), 1231–1321 (QAAG…TEPA), and 1379–1411 (AGPL…PQPY). A compositionally biased stretch (basic and acidic residues) spans 1126–1138 (EVYHTEKEPKKLP). Residues 1242–1251 (PTPSVVSITS) show a composition bias toward polar residues. Residues S1299 and S1304 each carry the phosphoserine modification. The span at 1312–1321 (AAEAASTEPA) shows a compositional bias: low complexity. Phosphoserine is present on residues S1462 and S1463. 2 positions are modified to phosphothreonine: T1467 and T1480. The disordered stretch occupies residues 1480–1527 (TDYSLSPPAKEALASDSQNGQEQGSCPEEGSDIALEDSATDTAVSPGP). S1485 is modified (phosphoserine). The segment covering 1494–1503 (SDSQNGQEQG) has biased composition (polar residues). The span at 1508–1518 (EGSDIALEDSA) shows a compositional bias: acidic residues.

In terms of assembly, interacts with RHOA, GNA13 and SLC1A6. Interacts with GNA12, PLXNB1 and PLXNB2. Interacts (via DH domain) with GCSAM (via C-terminus). Found in a complex with ARHGEF11 and ARHGEF12; binding to ARHGEF11 and ARHGEF12 enhances CDC42 GEF activity of PLEKHG4B, and PLEKHG4B, in turn, inhibits ARHGEF11- and ARHGEF12-mediated RHOA activation. Post-translationally, phosphorylated by MAP kinase p38 (MAPK11, MAPK12, MAPK13 and/or MAPK14). Ubiquitinated by the BCR(KLHL20) E3 ubiquitin ligase complex when previously phosphorylated by MAP kinase p38 (MAPK11, MAPK12, MAPK13 and/or MAPK14), leading to its degradation, thereby restricting RhoA activity and facilitating growth cone spreading and neurite outgrowth.

Its subcellular location is the cytoplasm. The protein localises to the membrane. May play a role in the regulation of RhoA GTPase by guanine nucleotide-binding alpha-12 (GNA12) and alpha-13 (GNA13). Acts as guanine nucleotide exchange factor (GEF) for RhoA GTPase and may act as GTPase-activating protein (GAP) for GNA12 and GNA13. Involved in neurotrophin-induced neurite outgrowth. This chain is Rho guanine nucleotide exchange factor 11 (Arhgef11), found in Rattus norvegicus (Rat).